Reading from the N-terminus, the 369-residue chain is Chorismate synthase (369 aa).

NADP(+) is bound by residues Arg48 and Arg54. Residues 125–127 (RSS), 238–239 (NA), Gly278, 293–297 (KPTSS), and Arg319 each bind FMN.

This sequence belongs to the chorismate synthase family. In terms of assembly, homotetramer. FMNH2 serves as cofactor.

It carries out the reaction 5-O-(1-carboxyvinyl)-3-phosphoshikimate = chorismate + phosphate. The protein operates within metabolic intermediate biosynthesis; chorismate biosynthesis; chorismate from D-erythrose 4-phosphate and phosphoenolpyruvate: step 7/7. Catalyzes the anti-1,4-elimination of the C-3 phosphate and the C-6 proR hydrogen from 5-enolpyruvylshikimate-3-phosphate (EPSP) to yield chorismate, which is the branch point compound that serves as the starting substrate for the three terminal pathways of aromatic amino acid biosynthesis. This reaction introduces a second double bond into the aromatic ring system. The chain is Chorismate synthase from Burkholderia thailandensis (strain ATCC 700388 / DSM 13276 / CCUG 48851 / CIP 106301 / E264).